The sequence spans 898 residues: Alanine--tRNA ligase (898 aa).

Zn(2+) contacts are provided by histidine 584, histidine 588, cysteine 686, and histidine 690.

Belongs to the class-II aminoacyl-tRNA synthetase family. Requires Zn(2+) as cofactor.

It is found in the cytoplasm. It carries out the reaction tRNA(Ala) + L-alanine + ATP = L-alanyl-tRNA(Ala) + AMP + diphosphate. Its function is as follows. Catalyzes the attachment of alanine to tRNA(Ala) in a two-step reaction: alanine is first activated by ATP to form Ala-AMP and then transferred to the acceptor end of tRNA(Ala). Also edits incorrectly charged Ser-tRNA(Ala) and Gly-tRNA(Ala) via its editing domain. This is Alanine--tRNA ligase from Myxococcus xanthus (strain DK1622).